Consider the following 341-residue polypeptide: MIRADLATIPTYVPGRRLVDATKLSSNEVSFSPLPAAVDAVTEATWGANRYPDMGAVELREALAEHLEVEFDQVTVGCGSSALCQQLVQATCAQGDEVIFPWRSFEAYPIFAQVAGATPVAIPLTADQNHDLDAMAAAITDKTRLIFICNPNNPSGTTITQAQFDNFMEKVPNDVVVGLDEAYFEFNRADDTPVATEEIHRHDNVIGLRTFSKAYGLAGLRVGYAFGNAEIIAAMNKVAIPFAVNSAAQAAALASLNSADELMERVEETVEKRDAVVSALGAAPTQANFVWLPGEGAAELAAKLAEHGIVIRAFPEGARISVTNAEETDKLLRAWEAINAG.

Position 213 is an N6-(pyridoxal phosphate)lysine (lysine 213).

The protein belongs to the class-II pyridoxal-phosphate-dependent aminotransferase family. As to quaternary structure, homodimer. Pyridoxal 5'-phosphate serves as cofactor.

It catalyses the reaction an aromatic L-alpha-amino acid + 2-oxoglutarate = an aromatic oxo-acid + L-glutamate. Its function is as follows. Aminotransferase that catalyzes the conversion of aromatic amino acids and 2-oxoglutarate into corresponding aromatic oxo acids and L-glutamate. May catalyze the transamination reaction in phenylalanine biosynthesis. The sequence is that of Aromatic amino acid aminotransferase from Corynebacterium glutamicum (strain ATCC 13032 / DSM 20300 / JCM 1318 / BCRC 11384 / CCUG 27702 / LMG 3730 / NBRC 12168 / NCIMB 10025 / NRRL B-2784 / 534).